Here is a 986-residue protein sequence, read N- to C-terminus: Isoleucine--tRNA ligase (986 aa).

The 'KMSKS' region motif lies at 534–538 (EMHKS). Residue Lys537 participates in ATP binding.

Belongs to the class-I aminoacyl-tRNA synthetase family. IleS type 2 subfamily. As to quaternary structure, monomer. Zn(2+) is required as a cofactor.

The protein localises to the cytoplasm. It carries out the reaction tRNA(Ile) + L-isoleucine + ATP = L-isoleucyl-tRNA(Ile) + AMP + diphosphate. Functionally, catalyzes the attachment of isoleucine to tRNA(Ile). As IleRS can inadvertently accommodate and process structurally similar amino acids such as valine, to avoid such errors it has two additional distinct tRNA(Ile)-dependent editing activities. One activity is designated as 'pretransfer' editing and involves the hydrolysis of activated Val-AMP. The other activity is designated 'posttransfer' editing and involves deacylation of mischarged Val-tRNA(Ile). This chain is Isoleucine--tRNA ligase (ileS), found in Saccharolobus solfataricus (strain ATCC 35092 / DSM 1617 / JCM 11322 / P2) (Sulfolobus solfataricus).